A 303-amino-acid polypeptide reads, in one-letter code: Acetaldehyde dehydrogenase 1 (303 aa).

Cys-130 (acyl-thioester intermediate) is an active-site residue. Residues 161–169 (SVGPGTRKN) and Asn-272 contribute to the NAD(+) site.

The protein belongs to the acetaldehyde dehydrogenase family.

The catalysed reaction is acetaldehyde + NAD(+) + CoA = acetyl-CoA + NADH + H(+). The polypeptide is Acetaldehyde dehydrogenase 1 (Methylibium petroleiphilum (strain ATCC BAA-1232 / LMG 22953 / PM1)).